The chain runs to 125 residues: RxLR effector protein Avh6 (125 aa).

The N-terminal stretch at methionine 1–alanine 25 is a signal peptide. Residues arginine 48 to arginine 70 carry the RxLR-dEER motif.

It belongs to the RxLR effector family.

It localises to the secreted. Its subcellular location is the host cell. Functionally, effector that suppresses plant defense responses during the early stages of pathogen infection. Suppresses cell death induced by effectors and PAMPs in plant hosts. Triggers a hypersensitive response (HR) in the presence of Rps1d. Suppresses BAX-induced cell death and enhan,ced P.capsici infection in Nicotiana benthamiana. Also suppresses effector-triggered immunity induction by associating with Avr1b and Rps1b, suggesting a role in suppressing plant immunity. The sequence is that of RxLR effector protein Avh6 from Phytophthora sojae (strain P6497) (Soybean stem and root rot agent).